A 508-amino-acid polypeptide reads, in one-letter code: Cytochrome P450 4A12 (508 aa).

2 helical membrane-spanning segments follow: residues 10–30 (IFPG…VLLL) and 120–140 (FLAP…WFQH). Residue Glu319 coordinates heme. Ser438 is subject to Phosphoserine. Position 455 (Cys455) interacts with heme.

It belongs to the cytochrome P450 family. Heme is required as a cofactor. Expressed at proximal straight tubules and preglomerular arteries of the outer medulla as well in the cortex regions of kidney (at protein level).

The protein resides in the endoplasmic reticulum membrane. The protein localises to the microsome membrane. The catalysed reaction is an organic molecule + reduced [NADPH--hemoprotein reductase] + O2 = an alcohol + oxidized [NADPH--hemoprotein reductase] + H2O + H(+). The enzyme catalyses dodecanoate + reduced [NADPH--hemoprotein reductase] + O2 = 12-hydroxydodecanoate + oxidized [NADPH--hemoprotein reductase] + H2O + H(+). It carries out the reaction dodecanoate + reduced [NADPH--hemoprotein reductase] + O2 = (11R)-hydroxydodecanoate + oxidized [NADPH--hemoprotein reductase] + H2O + H(+). It catalyses the reaction (5Z,8Z,11Z,14Z)-eicosatetraenoate + reduced [NADPH--hemoprotein reductase] + O2 = 20-hydroxy-(5Z,8Z,11Z,14Z)-eicosatetraenoate + oxidized [NADPH--hemoprotein reductase] + H2O + H(+). The catalysed reaction is prostaglandin A1 + reduced [NADPH--hemoprotein reductase] + O2 = 20-hydroxy prostaglandin A1 + oxidized [NADPH--hemoprotein reductase] + H2O + H(+). It participates in lipid metabolism; fatty acid metabolism. With respect to regulation, activated by cytochrome b5 and phosphatidylserine. In terms of biological role, a cytochrome P450 monooxygenase involved in the metabolism of fatty acids. Catalyzes predominantly the oxidation of the terminal carbon (omega-oxidation) of saturated and unsaturated fatty acids. May act as a major omega-hydroxylase for dodecanoic (lauric) acid in kidney. At preglomerular arteries, may participate in omega-hydroxylation of (5Z,8Z,11Z,14Z)-eicosatetraenoic acid (arachidonate) to 20-hydroxyeicosatetraenoic acid (20-HETE), a signaling molecule acting both as vasoconstrictive and natriuretic with overall effect on arterial blood pressure. Can also catalyze the oxidation of the penultimate carbon (omega-1 oxidation) of fatty acids with lower efficiency, displaying a preference for the (R)-stereoisomer. Mechanistically, uses molecular oxygen inserting one oxygen atom into a substrate, and reducing the second into a water molecule, with two electrons provided by NADPH via cytochrome P450 reductase (NADPH--hemoprotein reductase). This chain is Cytochrome P450 4A12 (Cyp4a12), found in Rattus norvegicus (Rat).